The chain runs to 480 residues: Probable cytosol aminopeptidase (480 aa).

Residues Lys-248 and Asp-253 each coordinate Mn(2+). The active site involves Lys-260. The Mn(2+) site is built by Asp-271, Asp-330, and Glu-332. Arg-334 is an active-site residue.

It belongs to the peptidase M17 family. It depends on Mn(2+) as a cofactor.

The protein resides in the cytoplasm. It catalyses the reaction Release of an N-terminal amino acid, Xaa-|-Yaa-, in which Xaa is preferably Leu, but may be other amino acids including Pro although not Arg or Lys, and Yaa may be Pro. Amino acid amides and methyl esters are also readily hydrolyzed, but rates on arylamides are exceedingly low.. The catalysed reaction is Release of an N-terminal amino acid, preferentially leucine, but not glutamic or aspartic acids.. Presumably involved in the processing and regular turnover of intracellular proteins. Catalyzes the removal of unsubstituted N-terminal amino acids from various peptides. The polypeptide is Probable cytosol aminopeptidase (Solibacter usitatus (strain Ellin6076)).